The sequence spans 79 residues: Small ribosomal subunit protein bS16c (79 aa).

This sequence belongs to the bacterial ribosomal protein bS16 family.

The protein localises to the plastid. It is found in the chloroplast. The sequence is that of Small ribosomal subunit protein bS16c from Thalassiosira pseudonana (Marine diatom).